The chain runs to 572 residues: Arginine--tRNA ligase (572 aa).

Positions 122 to 132 (PNLAKEMHVGH) match the 'HIGH' region motif.

The protein belongs to the class-I aminoacyl-tRNA synthetase family. In terms of assembly, monomer.

It localises to the cytoplasm. It catalyses the reaction tRNA(Arg) + L-arginine + ATP = L-arginyl-tRNA(Arg) + AMP + diphosphate. The protein is Arginine--tRNA ligase of Neisseria gonorrhoeae (strain ATCC 700825 / FA 1090).